The chain runs to 523 residues: Cytoplasmic dynein 1 light intermediate chain 1 (523 aa).

The interval 1–25 (MAAVGRVGSFGSSPPGLASTYASGP) is disordered. 74-81 (GEDGAGKT) contributes to the ATP binding site. Disordered regions lie at residues 200–219 (PGED…QEDR), 387–434 (PPTA…DPNM), and 457–523 (GSPG…GEAS). Position 207 is a phosphoserine (S207). T213 carries the post-translational modification Phosphothreonine. 2 positions are modified to phosphoserine: S398 and S405. T408 carries the post-translational modification Phosphothreonine. Phosphoserine is present on residues S412, S419, S421, and S427. The segment covering 412–421 (SVSSNVASVS) has biased composition (low complexity). Positions 458 to 473 (SPGGPGVGGSPGGGAA) are enriched in gly residues. The span at 474–485 (GASPSLPPSAKK) shows a compositional bias: low complexity. Phosphoserine is present on residues S486 and S510. A compositionally biased stretch (low complexity) spans 506–523 (PASVSPTTPTSPTEGEAS). T512, T513, and T515 each carry phosphothreonine. S516 bears the Phosphoserine mark.

The protein belongs to the dynein light intermediate chain family. In terms of assembly, homodimer. The cytoplasmic dynein 1 complex consists of two catalytic heavy chains (HCs) and a number of non-catalytic subunits presented by intermediate chains (ICs), light intermediate chains (LICs) and light chains (LCs); the composition seems to vary in respect to the IC, LIC and LC composition. The heavy chain homodimer serves as a scaffold for the probable homodimeric assembly of the respective non-catalytic subunits. The ICs and LICs bind directly to the HC dimer and the LCs assemble on the IC dimer. Self-associates. Interacts with DYNC1H1; DYNC1LI1 and DYNC1LI2 bind mutually exclusive to DYNC1H1. Interacts with PCNT. Forms a complex with RAB11FIP3 and RAB11A1; the interaction between DYNC1LI1 and RAB11FIP3 is direct and induces DYNC1LI1 localization onto endosomal membrane; the complex regulates endocytic trafficking. Interacts with RUFY3. Post-translationally, phosphorylated during mitosis but not in interphase.

It is found in the cytoplasm. The protein resides in the chromosome. It localises to the centromere. Its subcellular location is the kinetochore. The protein localises to the cytoskeleton. It is found in the spindle pole. The protein resides in the recycling endosome membrane. In terms of biological role, acts as one of several non-catalytic accessory components of the cytoplasmic dynein 1 complex that are thought to be involved in linking dynein to cargos and to adapter proteins that regulate dynein function. Cytoplasmic dynein 1 acts as a motor for the intracellular retrograde motility of vesicles and organelles along microtubules. May play a role in binding dynein to membranous organelles or chromosomes. Probably involved in the microtubule-dependent transport of pericentrin. Is required for progress through the spindle assembly checkpoint. The phosphorylated form appears to be involved in the selective removal of MAD1L1 and MAD1L2 but not BUB1B from kinetochores. Forms a functional Rab11/RAB11FIP3/dynein complex onto endosomal membrane that regulates the movement of peripheral sorting endosomes (SE) along microtubule tracks toward the microtubule organizing center/centrosome, generating the endosomal recycling compartment (ERC). The protein is Cytoplasmic dynein 1 light intermediate chain 1 (Dync1li1) of Mus musculus (Mouse).